Reading from the N-terminus, the 74-residue chain is Defensin (74 aa).

The signal sequence occupies residues 1–21 (MRGIYICLVFVLVCGLVSGLA). Positions 22–34 (DVPAESEMAHLRV) are excised as a propeptide. Cystine bridges form between Cys40/Cys61, Cys47/Cys69, and Cys51/Cys71.

In terms of tissue distribution, expressed in the hemocytes, fat body and ovaries.

It is found in the secreted. In terms of biological role, antibacterial peptide mostly active against Gram-positive bacteria. The polypeptide is Defensin (Rhipicephalus microplus (Cattle tick)).